We begin with the raw amino-acid sequence, 335 residues long: 5-dehydro-2-deoxygluconokinase (335 aa).

Belongs to the carbohydrate kinase PfkB family.

It catalyses the reaction 5-dehydro-2-deoxy-D-gluconate + ATP = 6-phospho-5-dehydro-2-deoxy-D-gluconate + ADP + H(+). The protein operates within polyol metabolism; myo-inositol degradation into acetyl-CoA; acetyl-CoA from myo-inositol: step 5/7. In terms of biological role, catalyzes the phosphorylation of 5-dehydro-2-deoxy-D-gluconate (2-deoxy-5-keto-D-gluconate or DKG) to 6-phospho-5-dehydro-2-deoxy-D-gluconate (DKGP). This Geobacillus kaustophilus (strain HTA426) protein is 5-dehydro-2-deoxygluconokinase.